The following is a 448-amino-acid chain: Methylenetetrahydrofolate--tRNA-(uracil-5-)-methyltransferase TrmFO (448 aa).

FAD is bound at residue 13 to 18 (GAGLAG).

The protein belongs to the MnmG family. TrmFO subfamily. FAD serves as cofactor.

The protein resides in the cytoplasm. It carries out the reaction uridine(54) in tRNA + (6R)-5,10-methylene-5,6,7,8-tetrahydrofolate + NADH + H(+) = 5-methyluridine(54) in tRNA + (6S)-5,6,7,8-tetrahydrofolate + NAD(+). It catalyses the reaction uridine(54) in tRNA + (6R)-5,10-methylene-5,6,7,8-tetrahydrofolate + NADPH + H(+) = 5-methyluridine(54) in tRNA + (6S)-5,6,7,8-tetrahydrofolate + NADP(+). Functionally, catalyzes the folate-dependent formation of 5-methyl-uridine at position 54 (M-5-U54) in all tRNAs. The chain is Methylenetetrahydrofolate--tRNA-(uracil-5-)-methyltransferase TrmFO from Streptococcus pyogenes serotype M6 (strain ATCC BAA-946 / MGAS10394).